The chain runs to 986 residues: Bifunctional glutamine synthetase adenylyltransferase/adenylyl-removing enzyme (986 aa).

The adenylyl removase stretch occupies residues 1-475 (MSFPLAHVDA…VFDHLIGEEK (475 aa)). The interval 481–986 (TETLWHDFLE…LFEHNDKYEE (506 aa)) is adenylyl transferase.

It belongs to the GlnE family. It depends on Mg(2+) as a cofactor.

It catalyses the reaction [glutamine synthetase]-O(4)-(5'-adenylyl)-L-tyrosine + phosphate = [glutamine synthetase]-L-tyrosine + ADP. It carries out the reaction [glutamine synthetase]-L-tyrosine + ATP = [glutamine synthetase]-O(4)-(5'-adenylyl)-L-tyrosine + diphosphate. Functionally, involved in the regulation of glutamine synthetase GlnA, a key enzyme in the process to assimilate ammonia. When cellular nitrogen levels are high, the C-terminal adenylyl transferase (AT) inactivates GlnA by covalent transfer of an adenylyl group from ATP to specific tyrosine residue of GlnA, thus reducing its activity. Conversely, when nitrogen levels are low, the N-terminal adenylyl removase (AR) activates GlnA by removing the adenylyl group by phosphorolysis, increasing its activity. The regulatory region of GlnE binds the signal transduction protein PII (GlnB) which indicates the nitrogen status of the cell. The protein is Bifunctional glutamine synthetase adenylyltransferase/adenylyl-removing enzyme of Pasteurella multocida (strain Pm70).